We begin with the raw amino-acid sequence, 168 residues long: Photosystem I assembly protein Ycf3 (168 aa).

TPR repeat units follow at residues 35–68, 72–105, and 120–153; these read AFAY…EIDP, SYIL…NPFL, and GEQA…TPGN.

This sequence belongs to the Ycf3 family.

It localises to the plastid. Its subcellular location is the chloroplast thylakoid membrane. In terms of biological role, essential for the assembly of the photosystem I (PSI) complex. May act as a chaperone-like factor to guide the assembly of the PSI subunits. The polypeptide is Photosystem I assembly protein Ycf3 (Morus indica (Mulberry)).